The primary structure comprises 1388 residues: DNA-directed RNA polymerase subunit beta' (1388 aa).

4 residues coordinate Zn(2+): cysteine 76, cysteine 78, cysteine 91, and cysteine 94. 3 residues coordinate Mg(2+): aspartate 467, aspartate 469, and aspartate 471. Zn(2+) contacts are provided by cysteine 810, cysteine 884, cysteine 891, and cysteine 894.

Belongs to the RNA polymerase beta' chain family. The RNAP catalytic core consists of 2 alpha, 1 beta, 1 beta' and 1 omega subunit. When a sigma factor is associated with the core the holoenzyme is formed, which can initiate transcription. Requires Mg(2+) as cofactor. The cofactor is Zn(2+).

It catalyses the reaction RNA(n) + a ribonucleoside 5'-triphosphate = RNA(n+1) + diphosphate. Functionally, DNA-dependent RNA polymerase catalyzes the transcription of DNA into RNA using the four ribonucleoside triphosphates as substrates. The sequence is that of DNA-directed RNA polymerase subunit beta' from Lawsonia intracellularis (strain PHE/MN1-00).